A 452-amino-acid polypeptide reads, in one-letter code: Exodeoxyribonuclease 7 large subunit (452 aa).

Belongs to the XseA family. As to quaternary structure, heterooligomer composed of large and small subunits.

The protein localises to the cytoplasm. It catalyses the reaction Exonucleolytic cleavage in either 5'- to 3'- or 3'- to 5'-direction to yield nucleoside 5'-phosphates.. In terms of biological role, bidirectionally degrades single-stranded DNA into large acid-insoluble oligonucleotides, which are then degraded further into small acid-soluble oligonucleotides. This Bacillus mycoides (strain KBAB4) (Bacillus weihenstephanensis) protein is Exodeoxyribonuclease 7 large subunit.